A 300-amino-acid polypeptide reads, in one-letter code: Cation-efflux pump FieF (300 aa).

4 helical membrane passes run 12 to 32 (AALS…FAWW), 40 to 60 (LAAL…LFVV), 82 to 102 (AALA…LTGF), and 114 to 134 (PGLG…LVTF). Residues aspartate 45 and aspartate 49 each contribute to the Zn(2+) site. Histidine 153 and aspartate 157 together coordinate Zn(2+). Residues 164 to 184 (ILIALALSWYGFHRADALFAL) traverse the membrane as a helical segment.

It belongs to the cation diffusion facilitator (CDF) transporter (TC 2.A.4) family. FieF subfamily. In terms of assembly, homodimer.

It is found in the cell inner membrane. It carries out the reaction Zn(2+)(in) + H(+)(out) = Zn(2+)(out) + H(+)(in). The catalysed reaction is Cd(2+)(in) + H(+)(out) = Cd(2+)(out) + H(+)(in). It catalyses the reaction Fe(2+)(in) + H(+)(out) = Fe(2+)(out) + H(+)(in). Its function is as follows. Divalent metal cation transporter which exports Zn(2+), Cd(2+) and possibly Fe(2+). May be involved in zinc and iron detoxification by efflux. The protein is Cation-efflux pump FieF of Yersinia enterocolitica serotype O:8 / biotype 1B (strain NCTC 13174 / 8081).